The following is a 212-amino-acid chain: 3,4-dihydroxy-2-butanone 4-phosphate synthase (212 aa).

Residues 37–38, aspartate 42, 150–154, and glutamate 174 each bind D-ribulose 5-phosphate; these read RE and RRGHT. Glutamate 38 contributes to the Mg(2+) binding site. Mg(2+) is bound at residue histidine 153.

This sequence belongs to the DHBP synthase family. As to quaternary structure, homodimer. The cofactor is Mg(2+). Mn(2+) is required as a cofactor.

It catalyses the reaction D-ribulose 5-phosphate = (2S)-2-hydroxy-3-oxobutyl phosphate + formate + H(+). It participates in cofactor biosynthesis; riboflavin biosynthesis; 2-hydroxy-3-oxobutyl phosphate from D-ribulose 5-phosphate: step 1/1. Its function is as follows. Catalyzes the conversion of D-ribulose 5-phosphate to formate and 3,4-dihydroxy-2-butanone 4-phosphate. In Shewanella pealeana (strain ATCC 700345 / ANG-SQ1), this protein is 3,4-dihydroxy-2-butanone 4-phosphate synthase.